The sequence spans 433 residues: UDP-N-acetylglucosamine 1-carboxyvinyltransferase 2 (433 aa).

23–24 (KN) is a phosphoenolpyruvate binding site. Residue R96 participates in UDP-N-acetyl-alpha-D-glucosamine binding. Catalysis depends on C120, which acts as the Proton donor. A 2-(S-cysteinyl)pyruvic acid O-phosphothioketal modification is found at C120. UDP-N-acetyl-alpha-D-glucosamine is bound by residues 125-129 (RPIDL), D308, and V330.

This sequence belongs to the EPSP synthase family. MurA subfamily.

It localises to the cytoplasm. It catalyses the reaction phosphoenolpyruvate + UDP-N-acetyl-alpha-D-glucosamine = UDP-N-acetyl-3-O-(1-carboxyvinyl)-alpha-D-glucosamine + phosphate. It functions in the pathway cell wall biogenesis; peptidoglycan biosynthesis. In terms of biological role, cell wall formation. Adds enolpyruvyl to UDP-N-acetylglucosamine. The chain is UDP-N-acetylglucosamine 1-carboxyvinyltransferase 2 from Enterococcus faecalis (strain ATCC 700802 / V583).